The following is a 363-amino-acid chain: GDP-fucose transporter 1 (363 aa).

Helical transmembrane passes span 33 to 55 (FLLRALQIALVVSLYWVTSISMV), 75 to 97 (VTFYQCLVTSLLCKGLSTLATCC), 110 to 129 (LKVARSVLPLSVVFIGMITF), 139 to 161 (VPFYNVGRSLTTVFNVLLSYLLL), 166 to 184 (SFYALLTCGVIIGGFWLGI), 194 to 213 (SLTGTIFGVLASLCVSLNAI), 226 to 248 (IWRLTFYNNVNACVLFLPLMIVL), and 263 to 285 (AHFWLMMTLGGLFGFAIGYVTGL).

Belongs to the TPT transporter family. SLC35C subfamily.

The protein resides in the golgi apparatus membrane. It carries out the reaction GMP(out) + GDP-beta-L-fucose(in) = GMP(in) + GDP-beta-L-fucose(out). Functionally, antiporter specific for GDP-l-fucose and depending on the concomitant reverse transport of GMP. Involved in GDP-fucose import from the cytoplasm into the Golgi lumen. This chain is GDP-fucose transporter 1 (Slc35c1), found in Mus musculus (Mouse).